The chain runs to 521 residues: Transcription activator of gluconeogenesis SS1G_02293 (521 aa).

A compositionally biased stretch (acidic residues) spans Met1–Val12. A disordered region spans residues Met1 to Pro75. Basic and acidic residues-rich tracts occupy residues Tyr21–Gly49 and Pro65–Arg74. Positions Cys84–Cys112 form a DNA-binding region, zn(2)-C6 fungal-type. Disordered regions lie at residues Ser273–Phe308, Val322–Ser358, and Asn478–Arg501. Positions Ser275–Met287 are enriched in polar residues. Low complexity-rich tracts occupy residues Asn297–Phe308, Lys337–Gly351, and Gly480–Ser494. Positions Thr426 to Thr497 constitute a PAS domain.

This sequence belongs to the ERT1/acuK family.

The protein resides in the nucleus. In terms of biological role, transcription factor which regulates nonfermentable carbon utilization. Activator of gluconeogenetic genes. The polypeptide is Transcription activator of gluconeogenesis SS1G_02293 (Sclerotinia sclerotiorum (strain ATCC 18683 / 1980 / Ss-1) (White mold)).